A 505-amino-acid chain; its full sequence is Trans-cinnamate 4-monooxygenase (505 aa).

The helical transmembrane segment at 3 to 23 (LILLEKSLLAVFFAVIFSIIV) threads the bilayer. (E)-cinnamate-binding positions include 213–218 (RSRLAQ) and Ala-306. Cys-447 provides a ligand contact to heme.

Belongs to the cytochrome P450 family. The cofactor is heme. As to expression, mostly expressed in stems, and, to a lower extent, in bulbs, roots, leaves and flowers.

It is found in the membrane. It catalyses the reaction (E)-cinnamate + reduced [NADPH--hemoprotein reductase] + O2 = (E)-4-coumarate + oxidized [NADPH--hemoprotein reductase] + H2O + H(+). It functions in the pathway alkaloid biosynthesis. The protein operates within phenylpropanoid metabolism; trans-4-coumarate biosynthesis; trans-4-coumarate from trans-cinnamate: step 1/1. Functionally, catalyzes the first oxidative step of the phenylpropanoid pathway in higher plants by transforming trans-cinnamate into p-coumarate. The compounds formed by this pathway are essential components for lignification, pollination, and defense against ultraviolet light, predators and pathogens. Trans-4-coumarate is a precursor to all amaryllidaceae alkaloids such as galanthamine, lycorine and haemanthamine, and including haemanthamine- and crinamine-type alkaloids, promising anticancer agents. The chain is Trans-cinnamate 4-monooxygenase from Narcissus pseudonarcissus (Daffodil).